Consider the following 900-residue polypeptide: Zinc finger protein 574 (900 aa).

3 consecutive C2H2-type zinc fingers follow at residues 16-38 (YVCS…QNSH), 76-98 (YQCL…QELH), and 126-148 (YECV…RQTH). Ser-164 bears the Phosphoserine mark. The segment at 213-235 (YKCSECSQLFQMPADFLEHQATH) adopts a C2H2-type 4 zinc-finger fold. A compositionally biased stretch (low complexity) spans 244–254 (AEPATQQETQV). Residues 244–306 (AEPATQQETQ…RRNNSGESGG (63 aa)) form a disordered region. Basic and acidic residues predominate over residues 273-290 (HSYELRNELRNGEAIGRD). Position 301 is a phosphoserine (Ser-301). C2H2-type zinc fingers lie at residues 312–334 (LFCS…LRSH), 339–361 (FKCP…LGDH), 367–389 (FLCV…RRAH), 395–416 (HSCP…RRTH), 469–492 (YRCL…RFVH), 498–520 (HKCS…LRTH), 526–548 (FPCP…RLTH), 554–576 (YRCG…RLVH), 582–604 (YRCQ…RYHH), and 610–633 (YKCR…LVIH). The C2H2-type 15; degenerate zinc finger occupies 639–662 (YRCSSCGAAFPSSLRLREHRCAAA). The C2H2-type 16 zinc-finger motif lies at 670–692 (FECGTCGKKVGSAARLQAHEAAH). The tract at residues 690–741 (AAHAAAGPGEVLAKEPPAPRASRATRTPVAPSPTALSGTTSAAPAAPARRRG) is disordered. The residue at position 721 (Ser-721) is a Phosphoserine. Low complexity predominate over residues 721–736 (SPTALSGTTSAAPAAP). Residue Thr-728 is modified to Phosphothreonine. C2H2-type zinc fingers lie at residues 742–764 (PECS…RRIH), 770–792 (YPCP…RRLH), 798–820 (FACE…RRIH), and 826–848 (YSCP…RKTH). Arg-836 carries the asymmetric dimethylarginine modification.

This sequence belongs to the krueppel C2H2-type zinc-finger protein family.

It is found in the nucleus. Its function is as follows. May be involved in transcriptional regulation. This chain is Zinc finger protein 574 (Znf574), found in Mus musculus (Mouse).